We begin with the raw amino-acid sequence, 197 residues long: Holliday junction branch migration complex subunit RuvA (197 aa).

The interval 1-64 (MIGHLEGRLR…EDAIQLYGFR (64 aa)) is domain I. The interval 65–143 (TVAEKDMFLR…VKKGREAEQP (79 aa)) is domain II. Positions 144 to 145 (AP) are flexible linker. Residues 146–197 (AAESSYGDAYSALVNLGYRPAEAEKALGKAIKSLGADPPVEKLLKETLRLLA) are domain III.

This sequence belongs to the RuvA family. In terms of assembly, homotetramer. Forms an RuvA(8)-RuvB(12)-Holliday junction (HJ) complex. HJ DNA is sandwiched between 2 RuvA tetramers; dsDNA enters through RuvA and exits via RuvB. An RuvB hexamer assembles on each DNA strand where it exits the tetramer. Each RuvB hexamer is contacted by two RuvA subunits (via domain III) on 2 adjacent RuvB subunits; this complex drives branch migration. In the full resolvosome a probable DNA-RuvA(4)-RuvB(12)-RuvC(2) complex forms which resolves the HJ.

It localises to the cytoplasm. In terms of biological role, the RuvA-RuvB-RuvC complex processes Holliday junction (HJ) DNA during genetic recombination and DNA repair, while the RuvA-RuvB complex plays an important role in the rescue of blocked DNA replication forks via replication fork reversal (RFR). RuvA specifically binds to HJ cruciform DNA, conferring on it an open structure. The RuvB hexamer acts as an ATP-dependent pump, pulling dsDNA into and through the RuvAB complex. HJ branch migration allows RuvC to scan DNA until it finds its consensus sequence, where it cleaves and resolves the cruciform DNA. In Syntrophobacter fumaroxidans (strain DSM 10017 / MPOB), this protein is Holliday junction branch migration complex subunit RuvA.